Reading from the N-terminus, the 436-residue chain is MGKNIVVLGAQWGDEGKGKIVDLLTERAKYVVRYQGGHNAGHTLISKGKKTVLHLIPSGILRNNTINIIGNGVVLEPHALIKEIKELEMQGVPVRNRLLLSAACPLILPYHVALDNEREKARGSKAIGTTGRGIGPAYEDKVARRALRLGDLFNQITFESQLKEVIEYHNFQLVHYYKAEPVHYQRVVESIWGIADILKNMVIDVTQVLSQAREKAENLLFEGAQGTFLDIDHGTYPYVTSSNTTAGSVATGAGFGPLYIDYILGIVKAYSTRVGAGPFPTELNDETGNFLRDKGHEYGATTGRSRRTGWLDAVSLRQAIQMNSLSGLCMTKLDVLDGLKTVKICVRYKRTDGTETMSTPITSAEWAEVEPIYEALPGWKESTFGIKEKSQLPQTALNYIKRVEELTGVPVDIISTGPDREETIILRHPFDEMIKK.

GTP contacts are provided by residues 13-19 (GDEGKGK) and 41-43 (GHT). The active-site Proton acceptor is the aspartate 14. Positions 14 and 41 each coordinate Mg(2+). Residues 14–17 (DEGK), 39–42 (NAGH), threonine 130, arginine 144, glutamine 225, threonine 240, and arginine 304 each bind IMP. Histidine 42 serves as the catalytic Proton donor. 300–306 (ATTGRSR) is a binding site for substrate. Residues arginine 306, 332–334 (KLD), and 415–417 (STG) contribute to the GTP site.

It belongs to the adenylosuccinate synthetase family. As to quaternary structure, homodimer. It depends on Mg(2+) as a cofactor.

The protein resides in the cytoplasm. It catalyses the reaction IMP + L-aspartate + GTP = N(6)-(1,2-dicarboxyethyl)-AMP + GDP + phosphate + 2 H(+). The protein operates within purine metabolism; AMP biosynthesis via de novo pathway; AMP from IMP: step 1/2. In terms of biological role, plays an important role in the de novo pathway of purine nucleotide biosynthesis. Catalyzes the first committed step in the biosynthesis of AMP from IMP. This is Adenylosuccinate synthetase from Hamiltonella defensa subsp. Acyrthosiphon pisum (strain 5AT).